Reading from the N-terminus, the 137-residue chain is Small ribosomal subunit protein uS12 (137 aa).

Residues 1 to 57 are disordered; that stretch reads MPTINQLVRKPRQSKIKKSDSPALNKGFNSKKKKFTDLNSPQKRGVCTRVGTMTPRK. Asp102 carries the post-translational modification 3-methylthioaspartic acid. A disordered region spans residues 118 to 137; the sequence is SGVDGRRQGRSLYGTKKPKN.

Belongs to the universal ribosomal protein uS12 family. Part of the 30S ribosomal subunit. Contacts proteins S8 and S17. May interact with IF1 in the 30S initiation complex.

With S4 and S5 plays an important role in translational accuracy. In terms of biological role, interacts with and stabilizes bases of the 16S rRNA that are involved in tRNA selection in the A site and with the mRNA backbone. Located at the interface of the 30S and 50S subunits, it traverses the body of the 30S subunit contacting proteins on the other side and probably holding the rRNA structure together. The combined cluster of proteins S8, S12 and S17 appears to hold together the shoulder and platform of the 30S subunit. This is Small ribosomal subunit protein uS12 from Staphylococcus aureus (strain COL).